A 399-amino-acid chain; its full sequence is Serine/threonine-protein kinase PknL (399 aa).

At 1-368 the chain is on the cytoplasmic side; it reads MVEAGTRDPL…FIWARQHARR (368 aa). The Protein kinase domain maps to 19-278; that stretch reads YLVQAKIASG…IAMGADLEAI (260 aa). ATP contacts are provided by residues 25 to 33 and lysine 48; that span reads IASGGTSTV. Phosphothreonine; by autocatalysis is present on threonine 32. A Phosphothreonine; by autocatalysis modification is found at threonine 62. Aspartate 142 acts as the Proton acceptor in catalysis. 3 positions are modified to phosphothreonine; by autocatalysis: threonine 173, threonine 175, and threonine 323. Residues 312-346 form a disordered region; it reads GQLGAKPVHHPTRQLTRQPGDCSEPASGSEPEHEP. Residues 369 to 389 form a helical membrane-spanning segment; it reads MVLVWVSVVLAITGLVASAAW. Over 390-399 the chain is Extracellular; that stretch reads TIGSNLSGLL.

Belongs to the protein kinase superfamily. Ser/Thr protein kinase family. Autophosphorylated. Thr-173 is required for autophosphorylation and transphosphorylation activities. Thr-175 is not necessary for autophosphorylation activity, but is required for full kinase activity.

It is found in the cell membrane. It catalyses the reaction L-seryl-[protein] + ATP = O-phospho-L-seryl-[protein] + ADP + H(+). The enzyme catalyses L-threonyl-[protein] + ATP = O-phospho-L-threonyl-[protein] + ADP + H(+). Functionally, phosphorylates the DNA-binding protein MT2231. May be involved in the regulation of cell division and cell envelope biosynthesis. The chain is Serine/threonine-protein kinase PknL (pknL) from Mycobacterium tuberculosis (strain CDC 1551 / Oshkosh).